Here is a 142-residue protein sequence, read N- to C-terminus: MKSFSAKITSIKKNWYCIDATNKILGRLASQVSIFLRGKNKPEFTPHIDVGDYIIIINASKIVVTGNKEKNKFYYHHSGYVGGIKKYTFKYMMLHHPTRIIKKAIKGMLPKGSLGQKIFKKLKVFPFNQHNLISQKPVFLNI.

The protein belongs to the universal ribosomal protein uL13 family. Part of the 50S ribosomal subunit.

Functionally, this protein is one of the early assembly proteins of the 50S ribosomal subunit, although it is not seen to bind rRNA by itself. It is important during the early stages of 50S assembly. In Buchnera aphidicola subsp. Cinara cedri (strain Cc), this protein is Large ribosomal subunit protein uL13.